The chain runs to 221 residues: UPF0758 protein HI_0952 (221 aa).

In terms of domain architecture, MPN spans 99–221 (IINDPETVKL…CYSFAENCLL (123 aa)). Zn(2+) contacts are provided by His-170, His-172, and Asp-183. The short motif at 170 to 183 (HNHPSGITEPSYSD) is the JAMM motif element.

This sequence belongs to the UPF0758 family.

This Haemophilus influenzae (strain ATCC 51907 / DSM 11121 / KW20 / Rd) protein is UPF0758 protein HI_0952.